The primary structure comprises 242 residues: Dickkopf-like protein 1 (242 aa).

The N-terminal stretch at 1 to 30 (MGEASPPAPARRHLLVLLLLLSTLVIPSAA) is a signal peptide. N97 and N112 each carry an N-linked (GlcNAc...) asparagine glycan.

As to quaternary structure, interacts with SLXL1; Co-localize in seminiferous tubules. Interacts with SLY. Post-translationally, N-glycosylated during spermatogenesis. Not N-glycosylated in mature sperm. More highly expressed in adult testis than in fetal testis. Exclusively expressed in the testis (at protein level). Intense expression in stages II, III and IV of spermatogenesis, whereas expression is lower in stage I.

It is found in the secreted. It localises to the cytoplasmic vesicle. Its subcellular location is the secretory vesicle. The protein resides in the acrosome. In terms of biological role, involved in fertilization by facilitating sperm penetration of the zona pellucida. May promote spermatocyte apoptosis, thereby limiting sperm production. In adults, may reduce testosterone synthesis in Leydig cells. Is not essential either for development or fertility. This is Dickkopf-like protein 1 from Homo sapiens (Human).